The primary structure comprises 599 residues: Exocyst complex component EXO70B2 (599 aa).

Residues 38–58 (GASGNRGGDPRPTPSRGGSNV) form a disordered region.

It belongs to the EXO70 family. Self interacts. Interacts with EXO70B1. Interacts with the exocyst subunits EXO70H1, SEC5A and SEC15B. Binds to SNAP33. Subunit of the exocyst complex that mediates vesicle tethering during exocytosis. Binds to PUB22. Target of the E3 ubiquitin-protein ligase PUB22 that mediates its ubiquitination and degradation via the 26S proteasome to attenuate pathogen-associated molecular patterns (PAMP)-induced signaling, especially is response to the bacterial elicitor flg22. As to expression, mostly expressed in leaves and, to a lower extent, in roots, cotyledons, internodes, flower buds, siliques and anthers.

It localises to the cytoplasmic vesicle. It is found in the phagosome. Its subcellular location is the cytoplasm. The protein resides in the nucleus. Component of an exocyst subcomplex specifically involved in autophagy-related, Golgi-independent membrane traffic to the vacuole. Regulates autophagosome formation and autophagy-related Golgi-independent import into the vacuole. Positive regulator of defense responses to pathogenic bacteria (e.g. P.syringae pv. maculicola), to the biotrophic oomycete H.arabidopsidis and to fungi (e.g. B.graminis hordei), especially in cell wall apposition formation related to plant defense. Required for both immediate and later responses triggered by pathogen-associated molecular patterns (PAMPs). Positive regulator of abscisic acid (ABA)-independent mannitol (drought)-promoted stomatal closure. This chain is Exocyst complex component EXO70B2, found in Arabidopsis thaliana (Mouse-ear cress).